A 169-amino-acid chain; its full sequence is Cell division inhibitor SulA (169 aa).

The segment at 106–112 is ftsZ binding; it reads ALRTGNY. The segment at 162–169 is lon protease binding; that stretch reads KIHSNLYH.

The protein belongs to the SulA family. In terms of assembly, interacts with FtsZ. Is rapidly cleaved and degraded by the Lon protease once DNA damage is repaired.

Its function is as follows. Component of the SOS system and an inhibitor of cell division. Accumulation of SulA causes rapid cessation of cell division and the appearance of long, non-septate filaments. In the presence of GTP, binds a polymerization-competent form of FtsZ in a 1:1 ratio, thus inhibiting FtsZ polymerization and therefore preventing it from participating in the assembly of the Z ring. This mechanism prevents the premature segregation of damaged DNA to daughter cells during cell division. In Escherichia coli O81 (strain ED1a), this protein is Cell division inhibitor SulA.